A 1518-amino-acid chain; its full sequence is Hormone receptor 4 (1518 aa).

5 disordered regions span residues 30–50, 145–327, 380–587, 672–820, and 887–913; these read RCSSDGESIADTSTSSPDLLA, TSST…KLSE, PSRI…QPQA, VGVG…SSVA, and SSNSTGLGGVGGGMGGRNLEAPHEPTD. Positions 34-46 are enriched in polar residues; it reads DGESIADTSTSSP. Composition is skewed to low complexity over residues 145–189 and 208–219; these read TSST…SSSG and SSSSAISAAAAS. A compositionally biased stretch (gly residues) spans 238–260; the sequence is EGGGPAGDGSGATGGGNTSGGST. Positions 291–323 are enriched in low complexity; the sequence is STTTTTGRPTLTPTNGVLSSASAGTGISTGSSA. Over residues 400-429 the composition is skewed to basic and acidic residues; it reads QRERERERDRERDRERERERDRDREREREQ. Composition is skewed to polar residues over residues 430 to 451 and 475 to 489; these read SISSSQQHLSRVSASPPTQLSH and RKSSPPTEHLLSQSM. 4 stretches are compositionally biased toward low complexity: residues 490-529, 546-586, 681-705, and 738-799; these read QHLTQQQAIHLHHLLGQQQQQQQASHPQQQQQQQHSPHSL, HHQQ…QQPQ, GSVQCPSPHPSSSSSSSQLSPQTPS, and GQSH…PSSS. 2 stretches are compositionally biased toward gly residues: residues 800–812 and 892–902; these read SGGGSVSGGGVGG and GLGGVGGGMGG. Residues 918-993 constitute a DNA-binding region (nuclear receptor); sequence PLVCMICEDK…QGMVLQAVRE (76 aa). 2 consecutive NR C4-type zinc fingers follow at residues 921–941 and 957–976; these read CMICEDKATGLHYGIITCEGC and CVADGTCEITKAQRNRCQYC. Disordered regions lie at residues 1015–1101, 1142–1210, and 1341–1371; these read KHKK…AAVA, LLQA…LPPH, and KRRGEGGGSRHGSPASTPLSTPTGTPLSTPI. Residues 1021–1060 show a composition bias toward low complexity; that stretch reads QKQQQQAAQQQQQQAAAQQQHQQQQQHQQHQQHQQQQLHS. Positions 1061 to 1077 are enriched in basic residues; that stretch reads PLHHHHHQGHQSHHAQQ. Low complexity-rich tracts occupy residues 1078-1101 and 1144-1193; these read QHHPQLSPHHLLSPQQQQLAAAVA and QAPP…HHQQ. Over residues 1194–1205 the composition is skewed to gly residues; sequence QGGGGGGAGGGA. Residues 1250 to 1518 enclose the NR LBD domain; the sequence is HALGMIQTLI…PFVLNSASIR (269 aa). Over residues 1351 to 1368 the composition is skewed to low complexity; sequence HGSPASTPLSTPTGTPLS.

This sequence belongs to the nuclear hormone receptor family. NR1 subfamily. During L2 and L3 stages, strong constitutive expression is seen in the ring gland. Lower expression is detected in specific neurons of the central nervous system (CNS) (at protein level).

Its subcellular location is the nucleus. Its function is as follows. Coordinates growth and maturation by mediating endocrine responses to the attainment of critical weight during larval development. Plays a central role in the genetic cascades triggered by the steroid hormone ecdysone at the onset of metamorphosis, acting as both a repressor of the early ecdysone-induced regulatory genes and an inducer of the ftz-f1 midprepupal competence factor. The protein is Hormone receptor 4 (Hr4) of Drosophila melanogaster (Fruit fly).